Here is a 251-residue protein sequence, read N- to C-terminus: Regulator of G-protein signaling 9-binding protein B (251 aa).

At 1 to 230 the chain is on the cytoplasmic side; the sequence is MPLQNVKVAD…NSKGCCSDGQ (230 aa). Coiled-coil stretches lie at residues 52-94 and 158-187; these read HLRD…ELER and ANKA…MKVN. Residues 231 to 250 form a helical; Anchor for type IV membrane protein membrane-spanning segment; the sequence is LIVFLLLCGTALVAITLYSI. L251 is a topological domain (extracellular).

This sequence belongs to the RGS7BP/RGS9BP family.

The protein localises to the membrane. In terms of biological role, regulator of G protein-coupled receptor (GPCR) signaling. Probably acts by regulating the activity of some 'R7' family protein (RGS6, RGS7, RGS9 and/or RGS11). The protein is Regulator of G-protein signaling 9-binding protein B (rgs9bp-b) of Xenopus laevis (African clawed frog).